The following is a 173-amino-acid chain: NADH-ubiquinone oxidoreductase chain 6 (173 aa).

The next 6 helical transmembrane spans lie at M1 to S21, F27 to G47, L53 to L73, W82 to G102, Y106 to L126, and G141 to I161.

The protein belongs to the complex I subunit 6 family.

The protein resides in the mitochondrion membrane. It catalyses the reaction a ubiquinone + NADH + 5 H(+)(in) = a ubiquinol + NAD(+) + 4 H(+)(out). In terms of biological role, core subunit of the mitochondrial membrane respiratory chain NADH dehydrogenase (Complex I) that is believed to belong to the minimal assembly required for catalysis. Complex I functions in the transfer of electrons from NADH to the respiratory chain. The immediate electron acceptor for the enzyme is believed to be ubiquinone. This Latimeria chalumnae (Coelacanth) protein is NADH-ubiquinone oxidoreductase chain 6 (MT-ND6).